We begin with the raw amino-acid sequence, 404 residues long: F-box only protein 12 (404 aa).

The 44-residue stretch at 1–44 (MKNSIPIDLIYEILSRLPAKSVARCRCVSKRWRSILRHQVFTEL) folds into the F-box domain. A helical membrane pass occupies residues 383–403 (LAILFCLFFLLFNYLIRLCWV).

It is found in the membrane. This Arabidopsis thaliana (Mouse-ear cress) protein is F-box only protein 12 (FBX12).